A 223-amino-acid polypeptide reads, in one-letter code: Family of serine hydrolases 2 (223 aa).

Catalysis depends on charge relay system residues Ser-110, Asp-174, and His-203.

This sequence belongs to the AB hydrolase 3 family.

It is found in the cytoplasm. Functionally, serine hydrolase of unknown specificity. The protein is Family of serine hydrolases 2 (FSH2) of Saccharomyces cerevisiae (strain ATCC 204508 / S288c) (Baker's yeast).